Reading from the N-terminus, the 492-residue chain is UDP-N-acetylmuramyl-tripeptide synthetase 2 (492 aa).

A UDP-N-acetyl-alpha-D-muramoyl-L-alanyl-D-glutamate-binding site is contributed by Ser-30. Residue 111-117 participates in ATP binding; that stretch reads GTNGKTT. Residues 154 to 155, Ser-181, Gln-187, and Arg-189 contribute to the UDP-N-acetyl-alpha-D-muramoyl-L-alanyl-D-glutamate site; that span reads TT. Residue Lys-221 is modified to N6-carboxylysine.

It belongs to the MurCDEF family. MurE subfamily. Carboxylation is probably crucial for Mg(2+) binding and, consequently, for the gamma-phosphate positioning of ATP.

Its subcellular location is the cytoplasm. The protein operates within cell wall biogenesis; peptidoglycan biosynthesis. Catalyzes the addition of an amino acid to the nucleotide precursor UDP-N-acetylmuramoyl-L-alanyl-D-glutamate (UMAG) in the biosynthesis of bacterial cell-wall peptidoglycan. This Oceanobacillus iheyensis (strain DSM 14371 / CIP 107618 / JCM 11309 / KCTC 3954 / HTE831) protein is UDP-N-acetylmuramyl-tripeptide synthetase 2.